Consider the following 477-residue polypeptide: Trigger factor (477 aa).

The 86-residue stretch at 169-254 folds into the PPIase FKBP-type domain; that stretch reads EDRVTIDYLG…VKEVAKPNEL (86 aa). Positions 435–477 are disordered; sequence VSKEELTAEDEDAASEAKPAKKAAAKKKAAPKKKAEEGKSEEA. The segment covering 454–466 has biased composition (basic residues); sequence AKKAAAKKKAAPK. The segment covering 467 to 477 has biased composition (basic and acidic residues); that stretch reads KKAEEGKSEEA.

Belongs to the FKBP-type PPIase family. Tig subfamily.

The protein localises to the cytoplasm. It carries out the reaction [protein]-peptidylproline (omega=180) = [protein]-peptidylproline (omega=0). Functionally, involved in protein export. Acts as a chaperone by maintaining the newly synthesized protein in an open conformation. Functions as a peptidyl-prolyl cis-trans isomerase. This chain is Trigger factor, found in Brucella suis biovar 1 (strain 1330).